Reading from the N-terminus, the 227-residue chain is Octanoyltransferase (227 aa).

The BPL/LPL catalytic domain occupies 31-209; the sequence is ANTIDEIWLV…VFLSLLGGTN (179 aa). Residues 71-78, 139-141, and 152-154 each bind substrate; these read RGGKITYH, SIG, and GLA. Cysteine 170 serves as the catalytic Acyl-thioester intermediate.

It belongs to the LipB family.

It is found in the cytoplasm. The enzyme catalyses octanoyl-[ACP] + L-lysyl-[protein] = N(6)-octanoyl-L-lysyl-[protein] + holo-[ACP] + H(+). It participates in protein modification; protein lipoylation via endogenous pathway; protein N(6)-(lipoyl)lysine from octanoyl-[acyl-carrier-protein]: step 1/2. Functionally, catalyzes the transfer of endogenously produced octanoic acid from octanoyl-acyl-carrier-protein onto the lipoyl domains of lipoate-dependent enzymes. Lipoyl-ACP can also act as a substrate although octanoyl-ACP is likely to be the physiological substrate. The sequence is that of Octanoyltransferase from Baumannia cicadellinicola subsp. Homalodisca coagulata.